The following is a 150-amino-acid chain: Urease accessory protein UreE (150 aa).

It belongs to the UreE family.

The protein localises to the cytoplasm. Its function is as follows. Involved in urease metallocenter assembly. Binds nickel. Probably functions as a nickel donor during metallocenter assembly. This Staphylococcus carnosus (strain TM300) protein is Urease accessory protein UreE.